Here is a 910-residue protein sequence, read N- to C-terminus: Eukaryotic translation initiation factor 3 subunit C (910 aa).

The segment at 1 to 21 (MSRFFANGSDSESESSEDEIQ) is disordered. Residues 11–20 (SESESSEDEI) show a composition bias toward acidic residues. Residues serine 34, serine 165, serine 176, and serine 185 each carry the phosphoserine modification. The disordered stretch occupies residues 157–281 (FREAPDQESE…KRAEDDEDGE (125 aa)). The segment covering 162-186 (DQESEAEDEVVAQESDGGDAGDDSD) has biased composition (acidic residues). Residues 193 to 207 (EAAPKAVKSAPAKAA) show a composition bias toward low complexity. The span at 209–235 (ADDDDSDDSIDWDSDSESETESSDDEN) shows a compositional bias: acidic residues. Basic and acidic residues predominate over residues 240-268 (MRERFLKRTTEKEEKDDDKRKDKRKEQKV). The PCI domain maps to 639–815 (FHMHINLELL…ETVVMHRSEP (177 aa)). Residues 847–910 (FFQRGNMGNR…QQQVQTIDEE (64 aa)) are disordered. Residues 862-874 (NRNQNNQGGNWLG) are compositionally biased toward low complexity. The span at 882–891 (RNRNQRGHHK) shows a compositional bias: basic residues. Residues 895–910 (DRQQQQQQQVQTIDEE) show a composition bias toward low complexity.

This sequence belongs to the eIF-3 subunit C family. As to quaternary structure, component of the eukaryotic translation initiation factor 3 (eIF-3) complex. The eIF-3 complex interacts with pix.

Its subcellular location is the cytoplasm. Its function is as follows. Component of the eukaryotic translation initiation factor 3 (eIF-3) complex, which is involved in protein synthesis of a specialized repertoire of mRNAs and, together with other initiation factors, stimulates binding of mRNA and methionyl-tRNAi to the 40S ribosome. The eIF-3 complex specifically targets and initiates translation of a subset of mRNAs involved in cell proliferation. The protein is Eukaryotic translation initiation factor 3 subunit C of Drosophila yakuba (Fruit fly).